The primary structure comprises 291 residues: MKSEAKDGEEESLQTAFKKLRVDASGSIASLSVGEGASVRASVRAAVEDAKPKSACASKDSWHGSTRKSSRGAVRTQRRRRSKSPVLHPPKFIHCSTIASSSSQLKHKSQTDSPDGSSGLGISTPKEFNAGECSSSLDTNHTGAVAEPLRTSVPRLPSESKEEDSSDAPQVSQASLQANDLSDFQSVSKLNLGKPCVCIGKECQCKRWHDMEVYSFSGLQNVPPLAPERRSTLEDYSQSLHTRTLSGSPRSCSEQARVYVDDVTIEDLSGYMEYYLYIPKKMSHMAEMMYT.

The disordered stretch occupies residues 48 to 174; that stretch reads EDAKPKSACA…SSDAPQVSQA (127 aa). Positions 65-83 are enriched in basic residues; sequence STRKSSRGAVRTQRRRRSK. Polar residues predominate over residues 132 to 142; the sequence is ECSSSLDTNHT. 2 positions are modified to phosphothreonine: T142 and T232.

The protein is Oxidative stress-responsive serine-rich protein 1 (OSER1) of Bos taurus (Bovine).